The following is a 184-amino-acid chain: Ras-related protein Rap-1b (184 aa).

10–17 (GSGGVGKS) provides a ligand contact to GTP. The Effector region signature appears at 32-40 (YDPTIEDSY). GTP contacts are provided by residues 57 to 61 (DTAGT) and 116 to 119 (NKCD). Position 181 is a cysteine methyl ester (Cys-181). Cys-181 carries S-geranylgeranyl cysteine lipidation. The propeptide at 182 to 184 (HLL) is removed in mature form.

It belongs to the small GTPase superfamily. Ras family.

Its subcellular location is the cell membrane. The protein resides in the cytoplasm. It is found in the cytosol. The protein localises to the cell junction. It catalyses the reaction GTP + H2O = GDP + phosphate + H(+). Probable GTP-binding protein that possesses GTPase activity. May play a role in endothelial cell polarity and endothelial barrier function. The protein is Ras-related protein Rap-1b (rap1b) of Xenopus laevis (African clawed frog).